The primary structure comprises 511 residues: NAD(P)H-quinone oxidoreductase subunit 2, chloroplastic (511 aa).

Transmembrane regions (helical) follow at residues Leu-15–Phe-35, Val-39–Leu-59, Ser-78–Ser-98, Ala-108–Gly-128, Leu-132–Tyr-152, Leu-167–Leu-187, Phe-210–Ala-230, Pro-244–Thr-264, Trp-278–Ile-298, Met-306–Asn-326, Leu-334–Phe-354, Val-377–Phe-397, Gly-410–Leu-430, and Leu-466–Ile-486.

The protein belongs to the complex I subunit 2 family. As to quaternary structure, NDH is composed of at least 16 different subunits, 5 of which are encoded in the nucleus.

The protein localises to the plastid. It is found in the chloroplast thylakoid membrane. The catalysed reaction is a plastoquinone + NADH + (n+1) H(+)(in) = a plastoquinol + NAD(+) + n H(+)(out). The enzyme catalyses a plastoquinone + NADPH + (n+1) H(+)(in) = a plastoquinol + NADP(+) + n H(+)(out). NDH shuttles electrons from NAD(P)H:plastoquinone, via FMN and iron-sulfur (Fe-S) centers, to quinones in the photosynthetic chain and possibly in a chloroplast respiratory chain. The immediate electron acceptor for the enzyme in this species is believed to be plastoquinone. Couples the redox reaction to proton translocation, and thus conserves the redox energy in a proton gradient. This is NAD(P)H-quinone oxidoreductase subunit 2, chloroplastic from Chlorokybus atmophyticus (Soil alga).